Reading from the N-terminus, the 562-residue chain is Arylsulfatase H (562 aa).

Ca(2+)-binding residues include Asp-15, Asp-16, and Cys-55. The Nucleophile role is filled by Cys-55. Position 55 is a 3-oxoalanine (Cys) (Cys-55). Lys-115 contacts substrate. The active site involves His-117. The next 2 membrane-spanning stretches (helical) occupy residues 167–187 (LWIS…PKFA) and 189–209 (WFSV…LFFT). His-271 contacts substrate. The Ca(2+) site is built by Asp-323 and Asn-324. Residue Lys-348 participates in substrate binding.

The protein belongs to the sulfatase family. Requires Ca(2+) as cofactor. The conversion to 3-oxoalanine (also known as C-formylglycine, FGly), of a serine or cysteine residue in prokaryotes and of a cysteine residue in eukaryotes, is critical for catalytic activity.

Its subcellular location is the membrane. This Homo sapiens (Human) protein is Arylsulfatase H (ARSH).